The chain runs to 267 residues: L-aspartate dehydrogenase (267 aa).

NAD(+) is bound by residues Ala124 and Asn190. Residue His218 is part of the active site.

Belongs to the L-aspartate dehydrogenase family.

It carries out the reaction L-aspartate + NADP(+) + H2O = oxaloacetate + NH4(+) + NADPH + H(+). It catalyses the reaction L-aspartate + NAD(+) + H2O = oxaloacetate + NH4(+) + NADH + H(+). It participates in cofactor biosynthesis; NAD(+) biosynthesis; iminoaspartate from L-aspartate (dehydrogenase route): step 1/1. Its function is as follows. Specifically catalyzes the NAD or NADP-dependent dehydrogenation of L-aspartate to iminoaspartate. The sequence is that of L-aspartate dehydrogenase from Methanococcus maripaludis (strain C5 / ATCC BAA-1333).